The following is a 206-amino-acid chain: Small ribosomal subunit protein uS4 (206 aa).

The S4 RNA-binding domain maps to 98–155 (TRLDNVVYRLGWALSRAQARQIVSHGKIAVNGKRVNIPSYNLKPGDVVELLDKDLIPV).

This sequence belongs to the universal ribosomal protein uS4 family. Part of the 30S ribosomal subunit. Contacts protein S5. The interaction surface between S4 and S5 is involved in control of translational fidelity.

In terms of biological role, one of the primary rRNA binding proteins, it binds directly to 16S rRNA where it nucleates assembly of the body of the 30S subunit. With S5 and S12 plays an important role in translational accuracy. The sequence is that of Small ribosomal subunit protein uS4 from Dictyoglomus turgidum (strain DSM 6724 / Z-1310).